Here is a 345-residue protein sequence, read N- to C-terminus: Biotin synthase (345 aa).

The region spanning 38–256 is the Radical SAM core domain; that stretch reads QQVQVSTLLS…IAVARIMMPS (219 aa). C53, C57, and C60 together coordinate [4Fe-4S] cluster. The [2Fe-2S] cluster site is built by C97, C128, C188, and R260.

The protein belongs to the radical SAM superfamily. Biotin synthase family. In terms of assembly, homodimer. Requires [4Fe-4S] cluster as cofactor. [2Fe-2S] cluster is required as a cofactor.

It carries out the reaction (4R,5S)-dethiobiotin + (sulfur carrier)-SH + 2 reduced [2Fe-2S]-[ferredoxin] + 2 S-adenosyl-L-methionine = (sulfur carrier)-H + biotin + 2 5'-deoxyadenosine + 2 L-methionine + 2 oxidized [2Fe-2S]-[ferredoxin]. It functions in the pathway cofactor biosynthesis; biotin biosynthesis; biotin from 7,8-diaminononanoate: step 2/2. Functionally, catalyzes the conversion of dethiobiotin (DTB) to biotin by the insertion of a sulfur atom into dethiobiotin via a radical-based mechanism. The chain is Biotin synthase from Photorhabdus laumondii subsp. laumondii (strain DSM 15139 / CIP 105565 / TT01) (Photorhabdus luminescens subsp. laumondii).